A 429-amino-acid polypeptide reads, in one-letter code: SET domain-containing protein 8 (429 aa).

An SET domain is found at 17–232; it reads KQITIKKIRK…ENEEVTINYG (216 aa).

This sequence belongs to the class V-like SAM-binding methyltransferase superfamily.

It localises to the cytoplasm. Its subcellular location is the nucleus. This Schizosaccharomyces pombe (strain 972 / ATCC 24843) (Fission yeast) protein is SET domain-containing protein 8 (set8).